Here is a 703-residue protein sequence, read N- to C-terminus: Polyribonucleotide nucleotidyltransferase (703 aa).

Mg(2+) contacts are provided by D484 and D490. The 60-residue stretch at 551–610 folds into the KH domain; that stretch reads PTVTTLRVLPEKISVIIGPAGKNIKKIIEETGVKIDLDPTGLVKIYATSKIAAEKAIDMI. The S1 motif domain maps to 620–688; sequence GEVYLGKVTR…DQGRIKVSLK (69 aa).

It belongs to the polyribonucleotide nucleotidyltransferase family. Mg(2+) is required as a cofactor.

The protein localises to the cytoplasm. It catalyses the reaction RNA(n+1) + phosphate = RNA(n) + a ribonucleoside 5'-diphosphate. Involved in mRNA degradation. Catalyzes the phosphorolysis of single-stranded polyribonucleotides processively in the 3'- to 5'-direction. This is Polyribonucleotide nucleotidyltransferase from Sulfurihydrogenibium sp. (strain YO3AOP1).